Consider the following 173-residue polypeptide: dCTP deaminase, dUMP-forming (173 aa).

Residues 93-98 (RSSIGR), aspartate 111, 119-121 (TLE), glutamine 138, and tyrosine 151 each bind dCTP. Glutamate 121 functions as the Proton donor/acceptor in the catalytic mechanism.

The protein belongs to the dCTP deaminase family. As to quaternary structure, homotrimer.

The enzyme catalyses dCTP + 2 H2O = dUMP + NH4(+) + diphosphate. It functions in the pathway pyrimidine metabolism; dUMP biosynthesis; dUMP from dCTP: step 1/1. Its function is as follows. Bifunctional enzyme that catalyzes both the deamination of dCTP to dUTP and the hydrolysis of dUTP to dUMP without releasing the toxic dUTP intermediate. The polypeptide is dCTP deaminase, dUMP-forming (Cytophaga hutchinsonii (strain ATCC 33406 / DSM 1761 / CIP 103989 / NBRC 15051 / NCIMB 9469 / D465)).